A 191-amino-acid polypeptide reads, in one-letter code: Prostaglandin-H2 D-isomerase (191 aa).

Positions 1-24 are cleaved as a signal peptide; the sequence is MATPNRPWMGLLLLGVLGVLQTPA. A glycan (N-linked (GlcNAc...) asparagine) is linked at asparagine 51. Cysteine 65 functions as the Nucleophile in the catalytic mechanism. N-linked (GlcNAc...) asparagine glycosylation occurs at asparagine 78. A disulfide bond links cysteine 89 and cysteine 186.

The protein belongs to the calycin superfamily. Lipocalin family. As to quaternary structure, monomer. In terms of tissue distribution, in the male reproductive system, it is expressed in the testis and epididymis, and is secreted into the seminal fluid.

The protein localises to the rough endoplasmic reticulum. It is found in the nucleus membrane. The protein resides in the golgi apparatus. Its subcellular location is the cytoplasm. It localises to the perinuclear region. The protein localises to the secreted. It catalyses the reaction prostaglandin H2 = prostaglandin D2. Its function is as follows. Catalyzes the conversion of PGH2 to PGD2, a prostaglandin involved in smooth muscle contraction/relaxation and a potent inhibitor of platelet aggregation. Involved in a variety of CNS functions, such as sedation, NREM sleep and PGE2-induced allodynia, and may have an anti-apoptotic role in oligodendrocytes. Binds small non-substrate lipophilic molecules, including biliverdin, bilirubin, retinal, retinoic acid and thyroid hormone, and may act as a scavenger for harmful hydrophobic molecules and as a secretory retinoid and thyroid hormone transporter. Possibly involved in development and maintenance of the blood-brain, blood-retina, blood-aqueous humor and blood-testis barrier. It is likely to play important roles in both maturation and maintenance of the central nervous system and male reproductive system. Involved in PLA2G3-dependent maturation of mast cells. PLA2G3 is secreted by immature mast cells and acts on nearby fibroblasts upstream to PTDGS to synthesize PGD2, which in turn promotes mast cell maturation and degranulation via PTGDR. This Ovis aries (Sheep) protein is Prostaglandin-H2 D-isomerase (PTGDS).